The following is a 109-amino-acid chain: Parvalbumin beta (109 aa).

2 consecutive EF-hand domains span residues 38–73 (KSKD…FDGK) and 77–109 (LTDK…VTKG). Residues aspartate 51, aspartate 53, serine 55, tyrosine 57, glutamate 59, glutamate 62, aspartate 90, aspartate 92, aspartate 94, lysine 96, and glutamate 101 each coordinate Ca(2+).

This sequence belongs to the parvalbumin family.

In terms of biological role, in muscle, parvalbumin is thought to be involved in relaxation after contraction. It binds two calcium ions. This Boa constrictor (Boa) protein is Parvalbumin beta.